Here is a 539-residue protein sequence, read N- to C-terminus: Eukaryotic translation initiation factor 3 subunit L (539 aa).

Positions 302-514 constitute a PCI domain; it reads TFSSILLYIQ…IHIADTKVSH (213 aa).

The protein belongs to the eIF-3 subunit L family. In terms of assembly, component of the eukaryotic translation initiation factor 3 (eIF-3) complex.

The protein localises to the cytoplasm. Component of the eukaryotic translation initiation factor 3 (eIF-3) complex, which is involved in protein synthesis of a specialized repertoire of mRNAs and, together with other initiation factors, stimulates binding of mRNA and methionyl-tRNAi to the 40S ribosome. The eIF-3 complex specifically targets and initiates translation of a subset of mRNAs involved in cell proliferation. The sequence is that of Eukaryotic translation initiation factor 3 subunit L from Anopheles gambiae (African malaria mosquito).